The primary structure comprises 224 residues: MAQITASMVKELREKTGAGMMDCKKVLSEADGNIEKAVELLREKGLAGAEKKAGRLASEGIVETYIHGGKIASLVEINSETDFVAKNEEFKNFAKDIAMQVVASNPKYVSREEVPAEEVEKEKEVLIHQALNENDGKNIPEDKAKMIAEKKVEGRINKFYSQICLLEQPFIKDPNKTVEQLLTDLIAKIGENIKIRRFARFEVGEGLEKKNEDFAEEVKKQMGQ.

Positions 81–84 (TDFV) are involved in Mg(2+) ion dislocation from EF-Tu.

The protein belongs to the EF-Ts family.

The protein localises to the cytoplasm. Its function is as follows. Associates with the EF-Tu.GDP complex and induces the exchange of GDP to GTP. It remains bound to the aminoacyl-tRNA.EF-Tu.GTP complex up to the GTP hydrolysis stage on the ribosome. The polypeptide is Elongation factor Ts (Finegoldia magna (strain ATCC 29328 / DSM 20472 / WAL 2508) (Peptostreptococcus magnus)).